The chain runs to 796 residues: Probable phosphoketolase (796 aa).

It belongs to the XFP family. Requires thiamine diphosphate as cofactor.

This chain is Probable phosphoketolase, found in Streptomyces coelicolor (strain ATCC BAA-471 / A3(2) / M145).